A 133-amino-acid polypeptide reads, in one-letter code: DNA-directed RNA polymerases I and III subunit RPAC2 (133 aa).

M1 carries the post-translational modification N-acetylmethionine. Positions 1-22 are disordered; that stretch reads MEEDQELERKMSGVKTSMAEGE.

This sequence belongs to the archaeal Rpo11/eukaryotic RPB11/RPC19 RNA polymerase subunit family. In terms of assembly, component of the RNA polymerase I and RNA polymerase III complexes consisting of at least 13 and 17 subunits, respectively. The transcriptionally active RNA polymerase III complex consists of a ten-subunit horseshoe-shaped catalytic core composed of POLR3A/RPC1, POLR3B/RPC2, POLR1C/RPAC1, POLR1D/RPAC2, POLR3K/RPC10, POLR2E/RPABC1, POLR2F/RPABC2, POLR2H/RPABC3, POLR2K/RPABC4 and POLR2L/RPABC5; a mobile stalk composed of two subunits POLR3H/RPC8 and CRCP/RPC9, protruding from the core and functioning primarily in transcription initiation; and additional subunits homologous to general transcription factors of the RNA polymerase II machinery, POLR3C/RPC3-POLR3F/RPC6-POLR3G/RPC7 heterotrimer required for transcription initiation and POLR3D/RPC4-POLR3E/RPC5 heterodimer involved in both transcription initiation and termination.

The protein resides in the nucleus. In terms of biological role, DNA-dependent RNA polymerase catalyzes the transcription of DNA into RNA using the four ribonucleoside triphosphates as substrates. Common component of RNA polymerases I and III which synthesize ribosomal RNA precursor pre-rRNA and short non-coding RNAs including 5S rRNA, snRNAs, tRNAs and miRNAs, respectively. This Bos taurus (Bovine) protein is DNA-directed RNA polymerases I and III subunit RPAC2 (POLR1D).